Here is a 550-residue protein sequence, read N- to C-terminus: Formate--tetrahydrofolate ligase (550 aa).

Position 60–67 (60–67) interacts with ATP; it reads TPFGEGKT.

It belongs to the formate--tetrahydrofolate ligase family.

It carries out the reaction (6S)-5,6,7,8-tetrahydrofolate + formate + ATP = (6R)-10-formyltetrahydrofolate + ADP + phosphate. The protein operates within one-carbon metabolism; tetrahydrofolate interconversion. The sequence is that of Formate--tetrahydrofolate ligase from Campylobacter curvus (strain 525.92).